A 1097-amino-acid chain; its full sequence is MCPSEMGTLWYLWSPVLISLAALFSKVTEGRGILESIQRFSLLPTYLPVTYHINNADVSFFLKEANQDIMRNSSLQSRVESFLIYKSRRLPVLNASYGPFSLEQVVPQDLMLPSNPFGFTNTFSLNWRLKAYILQEKVYLSHPKVQVLFHIVGRDWDDHRDENLPCLRVFAFRETREVRGSCRLGGALGLCVAQLEMLPGWFSPPSVVSGRRRPTEQPEGNPVELYYAVQPGDERGDCAKEDSRKSGGTPAGHNDVDESSPPLHRIGSVFLRETPSSPPLKELRLDSNVAVHYVPKTVRQGDVLTFPISVSRNCTEDRFTLRAKVKKGVSIVGVRASSSSIWDVRQSTEYTGKYAPAVIVCQKKSAGSEKSVADASYEVMKIDIEVEAPSDPPTTQLVTWQVEYPGEITSDLGVSKIYVSQKDLIEVIPLAMEAEILNTAILTGKTVAVPVKVISVEEDGTVQGLLDSVECRSSDEDVVKVSDRCDYVFVNGKEMKGKVNVVVSFTYQHLSSPLEMTVWVPRLPLQIEVSDMELNQIKGWRVPIVSNKRPARDSEEEDDDEKKGRGCTLQYQHAMVRVLTQFVAEAPDPGGHLAYLLGSDWQVDITELITDFMQVEEPRIAKLQGGQILTGQELGMTTIQILSPLSDAILAEKTITVLDEKVTITDLGVQLVTGLSLSLQLSPGSNRAIFATAMAQELLQRPKQEAAISCWVQFSDGSVTPLDIYDEKDFSLMATSLDEKVVSILQDPKFKWPIIAAENEGQGALVKVEMLISESCQKSKRKSVLAVGTASIKVKFGQNDANPNSSESGHLGAGLHVENINDRRSKKPFQEWGSPEGPFYSSSSMGLMEGWGSTTKRPTFQKKEGQENLLDDIILSQTMATDLTSFPDQMDLPGSNVGTEEHDLDQAAKGLSDLEIGMYALLGVFCLAILVFLINCVTFALKYRHKQVPFEEQEGLSHSHDWVGLSNRTELLGNHMNFASSQEEQITAIDRGLDFEESKLLLSSNSQNSINGQMFRSTGAMLTDDQEQKSEPPTSPTSKRKRVTFSTFSAISSDDGCPSGNTMVLSNEDDIKWVCQGLDPGECTEPHSCMERLHEHV.

The signal sequence occupies residues 1 to 30 (MCPSEMGTLWYLWSPVLISLAALFSKVTEG). Over 31 to 913 (RGILESIQRF…LDQAAKGLSD (883 aa)) the chain is Extracellular. A compositionally biased stretch (basic and acidic residues) spans 233 to 245 (DERGDCAKEDSRK). The tract at residues 233 to 263 (DERGDCAKEDSRKSGGTPAGHNDVDESSPPL) is disordered. The chain crosses the membrane as a helical span at residues 914-934 (LEIGMYALLGVFCLAILVFLI). Topologically, residues 935–1097 (NCVTFALKYR…SCMERLHEHV (163 aa)) are cytoplasmic. The disordered stretch occupies residues 1021–1042 (MLTDDQEQKSEPPTSPTSKRKR).

Belongs to the TMEM132 family. As to expression, expressed in mature oligodendrocytes in the white and gray matter of the brain.

It localises to the membrane. Regulates neuronal morphology via inhibition of the WAVE regulatory complex (WCR), a complex that controls F-actin cytoskeletal dynamics. The sequence is that of Transmembrane protein 132D (Tmem132d) from Mus musculus (Mouse).